The chain runs to 750 residues: Photosystem I P700 chlorophyll a apoprotein A1 (750 aa).

A run of 8 helical transmembrane segments spans residues 70–93 (VFSA…FHGA), 156–179 (LYCT…FHYH), 195–219 (LNHH…HVSL), 291–309 (IAHH…GHMY), 346–369 (WHAQ…HHMY), 385–411 (LSLF…IFMV), 433–455 (AIIS…LYIH), and 531–549 (FLVH…LILL). 2 residues coordinate [4Fe-4S] cluster: C573 and C582. Helical transmembrane passes span 589–610 (HVFL…HFSW) and 664–686 (LSAY…MFLF). A chlorophyll a'-binding site is contributed by H675. Positions 683 and 691 each coordinate chlorophyll a. W692 provides a ligand contact to phylloquinone. Residues 724–744 (AVGVTHYLLGGIATTWAFFLA) form a helical membrane-spanning segment.

It belongs to the PsaA/PsaB family. In terms of assembly, the PsaA/B heterodimer binds the P700 chlorophyll special pair and subsequent electron acceptors. PSI consists of a core antenna complex that captures photons, and an electron transfer chain that converts photonic excitation into a charge separation. The eukaryotic PSI reaction center is composed of at least 11 subunits. The cofactor is P700 is a chlorophyll a/chlorophyll a' dimer, A0 is one or more chlorophyll a, A1 is one or both phylloquinones and FX is a shared 4Fe-4S iron-sulfur center..

It is found in the plastid. It localises to the chloroplast thylakoid membrane. It catalyses the reaction reduced [plastocyanin] + hnu + oxidized [2Fe-2S]-[ferredoxin] = oxidized [plastocyanin] + reduced [2Fe-2S]-[ferredoxin]. PsaA and PsaB bind P700, the primary electron donor of photosystem I (PSI), as well as the electron acceptors A0, A1 and FX. PSI is a plastocyanin-ferredoxin oxidoreductase, converting photonic excitation into a charge separation, which transfers an electron from the donor P700 chlorophyll pair to the spectroscopically characterized acceptors A0, A1, FX, FA and FB in turn. Oxidized P700 is reduced on the lumenal side of the thylakoid membrane by plastocyanin. This is Photosystem I P700 chlorophyll a apoprotein A1 from Phalaenopsis aphrodite subsp. formosana (Moth orchid).